Consider the following 287-residue polypeptide: Large ribosomal subunit protein uL2 (287 aa).

2 disordered regions span residues Met-1–Glu-30 and Asn-211–Ser-287. The span at Gly-12–Ser-22 shows a compositional bias: polar residues. Composition is skewed to basic residues over residues Asn-211–Val-220 and Lys-258–Ser-287.

It belongs to the universal ribosomal protein uL2 family. In terms of assembly, part of the 50S ribosomal subunit. Forms a bridge to the 30S subunit in the 70S ribosome.

In terms of biological role, one of the primary rRNA binding proteins. Required for association of the 30S and 50S subunits to form the 70S ribosome, for tRNA binding and peptide bond formation. It has been suggested to have peptidyltransferase activity; this is somewhat controversial. Makes several contacts with the 16S rRNA in the 70S ribosome. In Cyanothece sp. (strain PCC 7425 / ATCC 29141), this protein is Large ribosomal subunit protein uL2.